A 554-amino-acid polypeptide reads, in one-letter code: Glucose-6-phosphate isomerase (554 aa).

Catalysis depends on E359, which acts as the Proton donor. Active-site residues include H390 and K518.

Belongs to the GPI family.

The protein resides in the cytoplasm. The catalysed reaction is alpha-D-glucose 6-phosphate = beta-D-fructose 6-phosphate. It participates in carbohydrate biosynthesis; gluconeogenesis. Its pathway is carbohydrate degradation; glycolysis; D-glyceraldehyde 3-phosphate and glycerone phosphate from D-glucose: step 2/4. In terms of biological role, catalyzes the reversible isomerization of glucose-6-phosphate to fructose-6-phosphate. The protein is Glucose-6-phosphate isomerase of Pseudomonas putida (strain ATCC 700007 / DSM 6899 / JCM 31910 / BCRC 17059 / LMG 24140 / F1).